The sequence spans 149 residues: UPF0260 protein Avin_32930 (149 aa).

Belongs to the UPF0260 family.

The polypeptide is UPF0260 protein Avin_32930 (Azotobacter vinelandii (strain DJ / ATCC BAA-1303)).